A 145-amino-acid polypeptide reads, in one-letter code: MDIRESRSQSPELSQSEDAVGPCPFLISVYHQFQTKNHVLDIFEDVIPSIQVYGWLTMTLYELGVLIADQLLLNNEETRHSEWSLQIRTIFYDKYKDRPIARDLGTVCLHNPKLFQGNKLLKRTGIKCGDKIDVTIKEDKIRIKK.

The protein belongs to the SAP18 family.

It localises to the cytoplasm. It is found in the nucleus. This is an uncharacterized protein from Schizosaccharomyces pombe (strain 972 / ATCC 24843) (Fission yeast).